The chain runs to 340 residues: NADPH dehydrogenase (340 aa).

23–26 (SPMC) is a binding site for FMN. Tyr-28 provides a ligand contact to substrate. The FMN site is built by Ala-60 and Gln-102. 164–167 (HGAH) lines the substrate pocket. FMN contacts are provided by residues Arg-215 and 307 to 308 (AR).

Belongs to the NADH:flavin oxidoreductase/NADH oxidase family. NamA subfamily. In terms of assembly, homotetramer. The cofactor is FMN.

The enzyme catalyses A + NADPH + H(+) = AH2 + NADP(+). Functionally, catalyzes the reduction of the double bond of an array of alpha,beta-unsaturated aldehydes and ketones. It also reduces the nitro group of nitroester and nitroaromatic compounds. It could have a role in detoxification processes. This Geobacillus sp. (strain WCH70) protein is NADPH dehydrogenase.